The sequence spans 104 residues: Large ribosomal subunit protein uL24 (104 aa).

The protein belongs to the universal ribosomal protein uL24 family. As to quaternary structure, part of the 50S ribosomal subunit.

In terms of biological role, one of two assembly initiator proteins, it binds directly to the 5'-end of the 23S rRNA, where it nucleates assembly of the 50S subunit. Functionally, one of the proteins that surrounds the polypeptide exit tunnel on the outside of the subunit. In Shewanella pealeana (strain ATCC 700345 / ANG-SQ1), this protein is Large ribosomal subunit protein uL24.